A 397-amino-acid chain; its full sequence is ATP-dependent RNA helicase RhlB (397 aa).

Residues 9–37 carry the Q motif motif; that stretch reads TRFHDFNLAPSLMHAIHDLGFPYCTPIQA. The region spanning 40 to 220 is the Helicase ATP-binding domain; it reads LGFTLRGQDA…KQWTVDPAIV (181 aa). 53–60 is a binding site for ATP; that stretch reads AQTGTGKT. Positions 166–169 match the DEAD box motif; that stretch reads DEAD. Positions 243–393 constitute a Helicase C-terminal domain; that stretch reads DKYKLLYNLV…MPPAELLKPV (151 aa).

Belongs to the DEAD box helicase family. RhlB subfamily. In terms of assembly, component of the RNA degradosome, which is a multiprotein complex involved in RNA processing and mRNA degradation.

The protein resides in the cytoplasm. The catalysed reaction is ATP + H2O = ADP + phosphate + H(+). In terms of biological role, DEAD-box RNA helicase involved in RNA degradation. Has RNA-dependent ATPase activity and unwinds double-stranded RNA. The sequence is that of ATP-dependent RNA helicase RhlB from Pseudomonas aeruginosa (strain UCBPP-PA14).